The sequence spans 408 residues: Serine/threonine transporter SstT (408 aa).

The next 9 membrane-spanning stretches (helical) occupy residues 11 to 31 (LANGSLVLQILVGIIAGVSLA), 43 to 63 (FLGSLFVGALKAIAPILVFIL), 82 to 102 (IVVLYLFGTFAAALTAVVLSM), 141 to 161 (ALMTGNYIGILAWGVGLGLAL), 192 to 212 (IGIFGLVAATFAETGFAAIAG), 216 to 236 (LLAVLLGAMAIIALIVNPLIV), 290 to 310 (IPLGATINMGGAAITITVLTL), 316 to 336 (LGIQVDLLTALLLSVVAAISA), and 363 to 383 (VAMQVVAVGFIIGVIQDAAET).

It belongs to the dicarboxylate/amino acid:cation symporter (DAACS) (TC 2.A.23) family.

It is found in the cell inner membrane. The enzyme catalyses L-serine(in) + Na(+)(in) = L-serine(out) + Na(+)(out). The catalysed reaction is L-threonine(in) + Na(+)(in) = L-threonine(out) + Na(+)(out). In terms of biological role, involved in the import of serine and threonine into the cell, with the concomitant import of sodium (symport system). The chain is Serine/threonine transporter SstT from Shewanella sp. (strain ANA-3).